A 327-amino-acid polypeptide reads, in one-letter code: Glycerol-3-phosphate dehydrogenase [NAD(P)+] (327 aa).

W15, R35, and K109 together coordinate NADPH. 3 residues coordinate sn-glycerol 3-phosphate: K109, G137, and S139. Residue A141 participates in NADPH binding. Sn-glycerol 3-phosphate is bound by residues K192, D245, S255, R256, and N257. K192 functions as the Proton acceptor in the catalytic mechanism. R256 contacts NADPH. Residues L275 and E277 each contribute to the NADPH site.

The protein belongs to the NAD-dependent glycerol-3-phosphate dehydrogenase family.

Its subcellular location is the cytoplasm. It carries out the reaction sn-glycerol 3-phosphate + NAD(+) = dihydroxyacetone phosphate + NADH + H(+). The catalysed reaction is sn-glycerol 3-phosphate + NADP(+) = dihydroxyacetone phosphate + NADPH + H(+). It participates in membrane lipid metabolism; glycerophospholipid metabolism. Functionally, catalyzes the reduction of the glycolytic intermediate dihydroxyacetone phosphate (DHAP) to sn-glycerol 3-phosphate (G3P), the key precursor for phospholipid synthesis. The sequence is that of Glycerol-3-phosphate dehydrogenase [NAD(P)+] from Chelativorans sp. (strain BNC1).